A 304-amino-acid polypeptide reads, in one-letter code: MYYGFDMGGTKIELGVFDAELNKVWQKRVLTPRTHYDELLTTLVDLVHEADAQVGVQGKVGIGIPGIQTGDNDALFTANLPAAMGKPLRTDLSQRLQRDVRINNDANCFVLSEAWDAEFRSYPVVLGLILGTGLGGGLVINGRPVDGRNGIAGEFGHLRLPSDALDIIGVDIPRVKCGCGQSGCIENYISGRGFEWLYEHMYGEALPAVTIIRHYRGGEEKAREFVDRFMDLLAACLGNLLTLFDPHLLVLGGGLSNFDEIYQILPTRLPSRLLPIAKLPRIEKARHGDAGGVRGAALLHLMDN.

Residues glycine 4–lysine 11 and glycine 133–isoleucine 140 each bind ATP. Positions 157, 177, 179, and 184 each coordinate Zn(2+).

It belongs to the ROK (NagC/XylR) family. NagK subfamily.

The catalysed reaction is N-acetyl-D-glucosamine + ATP = N-acetyl-D-glucosamine 6-phosphate + ADP + H(+). It participates in cell wall biogenesis; peptidoglycan recycling. Its function is as follows. Catalyzes the phosphorylation of N-acetyl-D-glucosamine (GlcNAc) derived from cell-wall degradation, yielding GlcNAc-6-P. This chain is N-acetyl-D-glucosamine kinase, found in Pectobacterium carotovorum subsp. carotovorum (strain PC1).